Consider the following 54-residue polypeptide: Ribulose bisphosphate carboxylase large chain (54 aa).

Positions 1–2 are excised as a propeptide; it reads MS. P3 carries the post-translational modification N-acetylproline. K14 is subject to N6,N6,N6-trimethyllysine.

This sequence belongs to the RuBisCO large chain family. Type I subfamily. In terms of assembly, heterohexadecamer of 8 large chains and 8 small chains.

It is found in the plastid. The protein resides in the chloroplast. It catalyses the reaction 2 (2R)-3-phosphoglycerate + 2 H(+) = D-ribulose 1,5-bisphosphate + CO2 + H2O. The catalysed reaction is D-ribulose 1,5-bisphosphate + O2 = 2-phosphoglycolate + (2R)-3-phosphoglycerate + 2 H(+). Its function is as follows. RuBisCO catalyzes two reactions: the carboxylation of D-ribulose 1,5-bisphosphate, the primary event in carbon dioxide fixation, as well as the oxidative fragmentation of the pentose substrate in the photorespiration process. Both reactions occur simultaneously and in competition at the same active site. This Icacina mannii protein is Ribulose bisphosphate carboxylase large chain (rbcL).